We begin with the raw amino-acid sequence, 575 residues long: Probable cytochrome P450 514A1 (575 aa).

Residues 4 to 24 form a helical membrane-spanning segment; it reads IFTIILTITILVLSLILKDLL. Cysteine 448 provides a ligand contact to heme.

Belongs to the cytochrome P450 family. Heme is required as a cofactor.

Its subcellular location is the membrane. The sequence is that of Probable cytochrome P450 514A1 (cyp514A1) from Dictyostelium discoideum (Social amoeba).